A 165-amino-acid chain; its full sequence is MTRLCLPRPEAREDPIPVPPRGLGAGEGSGSPVRPPVSTWGPSWAQLLDSVLWLGALGLTIQAVFSTTGPALLLLLVSFLTFDLLHRPAGHTLPQRKLLTRGQSQGAGEGPGQQEALLLQMGTVSGQLSLQDALLLLLMGLGPLLRACGMPLTLLGLAFCLHPWA.

The tract at residues 1–36 (MTRLCLPRPEAREDPIPVPPRGLGAGEGSGSPVRPP) is disordered. The helical transmembrane segment at 135-155 (LLLLMGLGPLLRACGMPLTLL) threads the bilayer.

The protein localises to the membrane. This is an uncharacterized protein from Homo sapiens (Human).